The following is a 570-amino-acid chain: Keratin, type I cytoskeletal 10 (570 aa).

Positions 1–16 are enriched in low complexity; the sequence is MSVLYSSSSKQFSSSR. The tract at residues 1–29 is disordered; that stretch reads MSVLYSSSSKQFSSSRSGGGGGGGSVRVS. The head stretch occupies residues 1 to 143; it reads MSVLYSSSSK…GDGGSLLSGN (143 aa). A phosphoserine mark is found at Ser15 and Ser17. At Arg32 the chain carries Asymmetric dimethylarginine; alternate. Residue Arg32 is modified to Omega-N-methylarginine; alternate. Residues Ser34, Ser45, Ser48, and Ser168 each carry the phosphoserine modification. The interval 144–179 is coil 1A; it reads GRVTMQNLNDRLASYMDKVRALEESNYELEGKIKEW. The IF rod domain occupies 144-458; sequence GRVTMQNLND…SLLEGEGSSS (315 aa). The tract at residues 180-200 is linker 1; it reads YEKHGNSSQREPRDYSKYYKT. The interval 201 to 292 is coil 1B; that stretch reads IEDLKGQILT…KNHEEEMRDL (92 aa). The interval 293–315 is linker 12; sequence QNVSTGDVNVEMNAAPGVDLTQL. The coil 2 stretch occupies residues 316–454; the sequence is LNNMRNQYEQ…QTYRSLLEGE (139 aa). The interval 451 to 570 is disordered; the sequence is LEGEGSSSGG…GDQSSKGPRY (120 aa). The interval 455–570 is tail; that stretch reads GSSSGGGGGR…GDQSSKGPRY (116 aa). Residues 456–562 are compositionally biased toward gly residues; that stretch reads SSSGGGGGRR…GGFKSSGGGD (107 aa).

Belongs to the intermediate filament family. As to quaternary structure, (Microbial infection) Interacts (via C-terminal tail domain) with the S.aureus clumping factor, clfB; this interaction probably mediates S.aureus attachment to the highly keratinized squamous epithelial cells from the nasal cavity. Heterotetramer of two type I and two type II keratins. Heterodimer with KRT1. Two heterodimers of KRT1 and KRT10 form a heterotetramer. The KRT10 subunit in the heterotetramer is probably disulfide-linked. Interacts with PLEC isoform 1C, when in a heterodimer with KRT1. In terms of assembly, (Microbial infection) Interacts (via the C-terminal tail domain) with S.pneumoniae serine-rich repeat protein PsrP; this interaction probably mediates S.pneumoniae adherence to lung tissue and subsequent pathogenesis. Expressed in the suprabasal layers of the epidermis throughout the entire sole (at protein level). Expressed in the infundibular regions of the ear, the interscale regions of the tail, and the interfollicular epidermis of the back. Expressed in lung tissue from young mice (at protein level).

It localises to the secreted. The protein resides in the extracellular space. The protein localises to the cell surface. Its subcellular location is the cytoplasm. Its function is as follows. Plays a role in the establishment of the epidermal barrier on plantar skin. Involved in the maintenance of cell layer development and keratin filament bundles in suprabasal cells of the epithelium. In terms of biological role, (Microbial infection) Acts as a mediator of S.aureus adherence to desquamated nasal epithelial cells via clfB, and hence may play a role in nasal colonization. Functionally, (Microbial infection) Binds S.pneumoniae PsrP, mediating adherence of the bacteria to lung cell lines. The chain is Keratin, type I cytoskeletal 10 (Krt10) from Mus musculus (Mouse).